Reading from the N-terminus, the 120-residue chain is Large ribosomal subunit protein uL22 (120 aa).

The protein belongs to the universal ribosomal protein uL22 family. Part of the 50S ribosomal subunit.

Its function is as follows. This protein binds specifically to 23S rRNA; its binding is stimulated by other ribosomal proteins, e.g. L4, L17, and L20. It is important during the early stages of 50S assembly. It makes multiple contacts with different domains of the 23S rRNA in the assembled 50S subunit and ribosome. In terms of biological role, the globular domain of the protein is located near the polypeptide exit tunnel on the outside of the subunit, while an extended beta-hairpin is found that lines the wall of the exit tunnel in the center of the 70S ribosome. The polypeptide is Large ribosomal subunit protein uL22 (Borreliella afzelii (strain PKo) (Borrelia afzelii)).